Reading from the N-terminus, the 931-residue chain is MNKQRFVVIDVETTGNSPKKGDKIIQIAAVVIENGQITERFSKYINPNKSIPAFIEQLTGISNQMVENEQPFEAVAEEVFQLLDGAYFVAHNIHFDLGFVKYELHKAGFQLPDCEVLDTVELSRIVFPGFEGYKLTELSEELQLRHDQPHRADSDAEVTGLIFLEILEKLRQLPYPTLKQLRRLSQHFISDLTHLLDMFINENRHTEIPGYTRFSSFSVREPEAIDVRINEDENFSFEIESWEAGNEKALSELMPGYEKRDGQMMMMREVADAFANREHALIEAPPGIGKTIGYLIPAALFAKKSKKPVIISTYSTLLQQQILTKDLPIVQDLFPFPVTAAILKGQSHYLCLYKFEQVLHEEDDNYDAVLTKAQLLVWLTETNTGDVAELNLPSGGKLLWDRLAYDDDSYKRSRSEHVIGFYERAKQIAMRSDLVITNHSLLLTDEGSHKKRLPESGTFIIDEAHHFERAASEHLGKRATYIELHTKLSRIGTLKEQGLLKKMRQLFQRNSLPVDSFFELEEWLQHVQAESDAFFSSVHSFVKRRKPKEDLNRLVFKVNKESQDKSWSILTDGAERLCSMLTHLQQLFEAQSSLMEKHLKGMKSKTVFLADEYQRSMKGLQHYCQTLQKLFFGSDDDEAVWIEIDAKGAKNAVAIYAQPLEPGELLADQFFARKNSVVLTSATLTVEGSFQFMIERLGLSDFFPRTMRIESPFSYDERMQVMIPKEMKSIQDTGQPEFIQDTARYIELMAKEKQPKILVLFTSHDMLKKVHQELKHNMSASGIQLLAQGITGGSPGKLMKTFKTSNQAILLGTNHFWEGVDFPGDELTTVMIVRLPFRSPDHPLHAAKCELARKKGKNPFQTVSLPEAVLTFRQGIGRLLRSAGDKGTIIILDRRIKTAGYGRLFLDALPTTSVSEMTDSELEAYVAGEKE.

The region spanning 7–162 is the Exonuclease domain; that stretch reads VVIDVETTGN…DSDAEVTGLI (156 aa). The Helicase ATP-binding domain maps to 250-510; sequence LSELMPGYEK…KKMRQLFQRN (261 aa). 284–291 is an ATP binding site; sequence APPGIGKT. A DEAH box motif is present at residues 462 to 465; that stretch reads DEAH. In terms of domain architecture, Helicase C-terminal spans 741–897; sequence DTARYIELMA…TIIILDRRIK (157 aa).

Belongs to the helicase family. DinG subfamily. Type 2 sub-subfamily.

It localises to the cytoplasm. Its function is as follows. 3'-5' exonuclease. The chain is 3'-5' exonuclease DinG from Bacillus subtilis (strain 168).